Reading from the N-terminus, the 352-residue chain is Secreted RxLR effector protein 122 (352 aa).

The first 21 residues, 1–21 (MRGAYYVLIALLVVASSQTSA), serve as a signal peptide directing secretion. The short motif at 48–65 (QFLRGSRNVPGDLAHEER) is the RxLR-dEER element. The segment covering 280–290 (RGGTTGASRGT) has biased composition (low complexity). The segment at 280-352 (RGGTTGASRG…VEPEGHRSKP (73 aa)) is disordered. Residues 302–315 (AASTSKGKSSVFTE) show a composition bias toward polar residues.

This sequence belongs to the RxLR effector family.

The protein resides in the secreted. It is found in the host nucleus. Secreted effector that acts as an elicitor that induces cell death in host plant cells. The chain is Secreted RxLR effector protein 122 from Plasmopara viticola (Downy mildew of grapevine).